Consider the following 343-residue polypeptide: NADP-dependent alkenal double bond reductase P2 (343 aa).

Tyr-52 and Tyr-79 together coordinate substrate. NADP(+) is bound by residues Gly-164 to Gly-167, Lys-190, Tyr-206, Asn-230, Cys-252 to Tyr-258, Phe-282 to Val-284, and Asn-332.

The protein belongs to the NADP-dependent oxidoreductase L4BD family. As to quaternary structure, homodimer.

It carries out the reaction an n-alkanal + NAD(+) = an alk-2-enal + NADH + H(+). The enzyme catalyses an n-alkanal + NADP(+) = an alk-2-enal + NADPH + H(+). In terms of biological role, catalyzes the reduction of the 7-8 double bond of phenylpropanal substrates, such as p-coumaryl aldehyde and coniferyl aldehyde (in vitro). Has activity towards toxic substrates, such as 4-hydroxy-(2E)-nonenal (in vitro). May play a distinct role in plant antioxidant defense and is possibly involved in NAD(P)/NAD(P)h homeostasis. This is NADP-dependent alkenal double bond reductase P2 (P2) from Arabidopsis thaliana (Mouse-ear cress).